Here is a 238-residue protein sequence, read N- to C-terminus: Small ribosomal subunit protein uS2 (238 aa).

It belongs to the universal ribosomal protein uS2 family.

The sequence is that of Small ribosomal subunit protein uS2 from Chloroflexus aurantiacus (strain ATCC 29366 / DSM 635 / J-10-fl).